Consider the following 458-residue polypeptide: Sugar transporter ERD6-like 10 (458 aa).

The next 12 helical transmembrane spans lie at 17–37 (ITAC…SYGC), 66–86 (FLNL…VILG), 96–116 (LFCI…WLDL), 119–139 (ISLG…IAEI), 150–170 (ASTL…GTVI), 174–194 (VLAV…YFIP), 257–277 (LVVG…GITY), 292–312 (LGSM…LILV), 319–339 (PLLL…GVSF), 350–370 (FIPV…AIGI), 393–413 (IVAL…NFMF), and 419–439 (GTFY…WMLV).

It belongs to the major facilitator superfamily. Sugar transporter (TC 2.A.1.1) family.

It localises to the membrane. Functionally, sugar transporter. This Arabidopsis thaliana (Mouse-ear cress) protein is Sugar transporter ERD6-like 10.